Reading from the N-terminus, the 322-residue chain is tRNA-dihydrouridine(16) synthase (322 aa).

FMN contacts are provided by residues 7-9 (PME) and Q68. The Proton donor role is filled by C98. Residues K139, 200–202 (NGE), and 224–225 (CR) each bind FMN.

It belongs to the Dus family. DusC subfamily. FMN serves as cofactor.

The catalysed reaction is 5,6-dihydrouridine(16) in tRNA + NADP(+) = uridine(16) in tRNA + NADPH + H(+). It carries out the reaction 5,6-dihydrouridine(16) in tRNA + NAD(+) = uridine(16) in tRNA + NADH + H(+). In terms of biological role, catalyzes the synthesis of 5,6-dihydrouridine (D), a modified base found in the D-loop of most tRNAs, via the reduction of the C5-C6 double bond in target uridines. Specifically modifies U16 in tRNAs. The polypeptide is tRNA-dihydrouridine(16) synthase (Vibrio parahaemolyticus serotype O3:K6 (strain RIMD 2210633)).